The sequence spans 183 residues: Large ribosomal subunit protein uL5 (183 aa).

This sequence belongs to the universal ribosomal protein uL5 family. As to quaternary structure, part of the 50S ribosomal subunit; part of the 5S rRNA/L5/L18/L25 subcomplex. Contacts the 5S rRNA and the P site tRNA. Forms a bridge to the 30S subunit in the 70S ribosome.

Its function is as follows. This is one of the proteins that bind and probably mediate the attachment of the 5S RNA into the large ribosomal subunit, where it forms part of the central protuberance. In the 70S ribosome it contacts protein S13 of the 30S subunit (bridge B1b), connecting the 2 subunits; this bridge is implicated in subunit movement. Contacts the P site tRNA; the 5S rRNA and some of its associated proteins might help stabilize positioning of ribosome-bound tRNAs. This is Large ribosomal subunit protein uL5 from Leptospira biflexa serovar Patoc (strain Patoc 1 / Ames).